The chain runs to 1697 residues: Phosphatidylinositol 3-kinase 3 (1697 aa).

6 disordered regions span residues 57 to 91, 169 to 229, 244 to 279, 310 to 376, 398 to 428, and 440 to 504; these read RSIN…TQPC, INNN…DSSI, KTTE…ENEI, KKNN…NSVG, SWTS…SGSS, and DLLK…NNDE. Low complexity-rich tracts occupy residues 60–87, 170–196, and 212–222; these read NNNN…NNNN and NNNSNNNNNIN. 2 stretches are compositionally biased toward low complexity: residues 312–374 and 398–408; these read NNNN…TTNS and SWTSSKPTSSS. Composition is skewed to polar residues over residues 409–428 and 444–456; these read IGFA…SGSS and SPSS…SDIF. Residues 457–503 are compositionally biased toward low complexity; the sequence is NENNNNNNNNNNNNNNNNNNNNNNNNNNNNNNNNEELINNNNNNNND. Residues 737-823 enclose the PI3K-RBD domain; sequence PEFFVIRVHL…KGEIDLTMVE (87 aa). The C2 PI3K-type domain occupies 888-1036; sequence VTENLQVRLL…QAIIIAFEFK (149 aa). The PIK helical domain maps to 1060-1238; sequence GNELPVVTME…RVLSSGFLRY (179 aa). Residues 1304–1581 form the PI3K/PI4K catalytic domain; the sequence is IPEKCKSMDS…LIHESIGTLT (278 aa). The tract at residues 1310–1316 is G-loop; that stretch reads SMDSAKV. Positions 1447 to 1455 are catalytic loop; the sequence is GIGDRHNDN. The activation loop stretch occupies residues 1466-1492; it reads HIDFGHFLGNFKTFAGFQREKAPFVLT. The span at 1609-1625 shows a compositional bias: low complexity; the sequence is ASSLNLNKNKPSSQSKL. The interval 1609–1697 is disordered; that stretch reads ASSLNLNKNK…DTEKENSIDK (89 aa). 5 tandem repeats follow at residues 1622 to 1626, 1627 to 1631, 1632 to 1636, 1642 to 1646, and 1647 to 1651. Positions 1622–1651 are 5 X 5 AA approximate repeats; that stretch reads QSKLDLSRSDLSRSDSSRSDSSRLDLSRSD. Basic and acidic residues-rich tracts occupy residues 1626–1681 and 1688–1697; these read DLSR…DKDN and DTEKENSIDK. Residues 1659-1672 are 7 X 2 AA tandem repeats of K-E; it reads KEKEKEKEKEKEKE.

The protein belongs to the PI3/PI4-kinase family.

It catalyses the reaction a 1,2-diacyl-sn-glycero-3-phospho-(1D-myo-inositol) + ATP = a 1,2-diacyl-sn-glycero-3-phospho-(1D-myo-inositol-3-phosphate) + ADP + H(+). The chain is Phosphatidylinositol 3-kinase 3 (pikC) from Dictyostelium discoideum (Social amoeba).